A 78-amino-acid polypeptide reads, in one-letter code: Calcium/calmodulin-dependent protein kinase II inhibitor 1 (78 aa).

The segment at 41–68 is CAMK2 inhibitory domain; the sequence is NKRPPKLGQIGRSKRVVIEDDRIDDVLK.

The protein belongs to the CAMK2N family. As to quaternary structure, interacts with CAMK2B; the presence of Ca(2+)/calmodulin increases the interaction but is not essential. Interacts with CAMK2A; this interaction requires CAMK2A activation by Ca(2+).

It localises to the synapse. The protein resides in the cell projection. It is found in the dendrite. The protein localises to the postsynaptic density. In terms of biological role, potent and specific inhibitor of CaM-kinase II (CAMK2). Plays a role in the maintenance of long-term retrieval-induced memory in response to contextual fear. Modulates blood pressure and vascular reactivity via regulation of CAMK2 activity in addition to regulation of left ventricular mass. Mediates the NLRP3 inflammasome in cardiomyocytes via acting as an inhibitor of the MAPK14/p38 and MAPK8/JNK pathways, thereby regulating ventricular remodeling and cardiac rhythm post-myocardial infarction. Negatively effects insulin sensitivity and promotes lipid formation in adipose tissues independent of CAMK2 signaling. In Bos taurus (Bovine), this protein is Calcium/calmodulin-dependent protein kinase II inhibitor 1 (CAMK2N1).